The sequence spans 452 residues: UPF0210 protein Cthe_0410 (452 aa).

This sequence belongs to the UPF0210 family. In terms of assembly, homodimer.

This chain is UPF0210 protein Cthe_0410, found in Acetivibrio thermocellus (strain ATCC 27405 / DSM 1237 / JCM 9322 / NBRC 103400 / NCIMB 10682 / NRRL B-4536 / VPI 7372) (Clostridium thermocellum).